A 61-amino-acid polypeptide reads, in one-letter code: Large ribosomal subunit protein uL30 (61 aa).

It belongs to the universal ribosomal protein uL30 family. Part of the 50S ribosomal subunit.

This is Large ribosomal subunit protein uL30 from Chromohalobacter salexigens (strain ATCC BAA-138 / DSM 3043 / CIP 106854 / NCIMB 13768 / 1H11).